Here is a 397-residue protein sequence, read N- to C-terminus: CCA-adding enzyme (397 aa).

ATP contacts are provided by Gly-26 and Arg-29. Positions 26 and 29 each coordinate CTP. Mg(2+) contacts are provided by Asp-39 and Asp-41. Positions 110, 153, 156, 159, and 162 each coordinate ATP. Residues Arg-110, Asp-153, Arg-156, Arg-159, and Arg-162 each contribute to the CTP site.

It belongs to the tRNA nucleotidyltransferase/poly(A) polymerase family. Bacterial CCA-adding enzyme type 3 subfamily. In terms of assembly, homodimer. It depends on Mg(2+) as a cofactor.

It carries out the reaction a tRNA precursor + 2 CTP + ATP = a tRNA with a 3' CCA end + 3 diphosphate. The catalysed reaction is a tRNA with a 3' CCA end + 2 CTP + ATP = a tRNA with a 3' CCACCA end + 3 diphosphate. Functionally, catalyzes the addition and repair of the essential 3'-terminal CCA sequence in tRNAs without using a nucleic acid template. Adds these three nucleotides in the order of C, C, and A to the tRNA nucleotide-73, using CTP and ATP as substrates and producing inorganic pyrophosphate. tRNA 3'-terminal CCA addition is required both for tRNA processing and repair. Also involved in tRNA surveillance by mediating tandem CCA addition to generate a CCACCA at the 3' terminus of unstable tRNAs. While stable tRNAs receive only 3'-terminal CCA, unstable tRNAs are marked with CCACCA and rapidly degraded. In Bacillus cereus (strain B4264), this protein is CCA-adding enzyme.